We begin with the raw amino-acid sequence, 31 residues long: Cyclotide hyen-I (31 aa).

The segment at residues G1–D31 is a cross-link (cyclopeptide (Gly-Asp)). Cystine bridges form between C5–C21, C9–C23, and C14–C28.

This is a cyclic peptide. In terms of tissue distribution, detected in seeds (at protein level).

Functionally, probably participates in a plant defense mechanism. This chain is Cyclotide hyen-I, found in Pigea enneasperma (Spade flower).